Consider the following 736-residue polypeptide: MVRYKQTMEILKIMRNLEQVRNIGITAHVDHGKTTLSDSLLAAAGIISEKIAGEALALDYLDVEQRRGITVKSANISLYHEYKGKPYVINLIDTPGHVDFSAKTTRAMRVIDGAILVVDAVEGVMTQTEMYLRAALEERVRPVLFINKVDRLIKELRLSPQEIQQRFVQIIKEVNQLIAMYADKEFKTKWQLDPAKGQVAFGSARDRWGFTVPMAKQKGIKFSDIVDLYKKGKEALPELQKLAPLHEAVLDMVVKFIPNPREAQKYRLPKIWHGDLNSEIGKAMLETDPNGPLVMLVNDVRIDPHAGLVATGRVFSGTLRAGEEVWLVNARMKQKVLQVSLYMGPYRELADEIVAGNIAAVLGLDKARAGETVVAVEYKDMMTPFEKLRMISEPVVTVAIEPKNPRDLPKLIDALHKLSIEDPSLVVRINEETGEYLLSGMGPLHIEIALTFLKENYGLDVIASQPIIVYRESIRDKSRVFEGKSPNKHNKLYISVEPLDEKTISLIHDGIITEDMDPKQRAKVLREEAGWPTDQARRIWAIDENINVFVDLTTGVQHLREVKDTIIQGFRLAMREGPLAMEPVRGVKVILHDAIIHEDPAHRGPGQIYPAVRNAIYAGMLTAKPTLLEPIQKLDIKAPMEYLGNITTIITKKRGKILQVLQQGAVARIIAEIPVAETFDLAEQLRGATAGKAIWGQEFSRWAPVPDSMLLDLVRKIRERKGLKPEPPRPEDFIGF.

The tr-type G domain maps to 18 to 261 (EQVRNIGITA…MVVKFIPNPR (244 aa)). GTP is bound by residues 27–34 (AHVDHGKT), 93–97 (DTPGH), and 147–150 (NKVD). H602 carries the post-translational modification Diphthamide.

Belongs to the TRAFAC class translation factor GTPase superfamily. Classic translation factor GTPase family. EF-G/EF-2 subfamily.

It is found in the cytoplasm. Functionally, catalyzes the GTP-dependent ribosomal translocation step during translation elongation. During this step, the ribosome changes from the pre-translocational (PRE) to the post-translocational (POST) state as the newly formed A-site-bound peptidyl-tRNA and P-site-bound deacylated tRNA move to the P and E sites, respectively. Catalyzes the coordinated movement of the two tRNA molecules, the mRNA and conformational changes in the ribosome. This Staphylothermus marinus (strain ATCC 43588 / DSM 3639 / JCM 9404 / F1) protein is Elongation factor 2.